A 202-amino-acid polypeptide reads, in one-letter code: uncharacterized protein (202 aa).

This is an uncharacterized protein from Pseudanabaena tenuis (strain PCC 7409).